The following is a 1066-amino-acid chain: Ribosomal protein S6 kinase delta-1 (1066 aa).

The PX domain maps to 8–132 (SADLARFYTV…DFFKGGIIND (125 aa)). The segment at 207–228 (VASDSEQSKTEEERESRSLFPG) is disordered. The segment covering 212 to 223 (EQSKTEEERESR) has biased composition (basic and acidic residues). One can recognise an MIT domain in the interval 277–305 (VQGESSPTRREAVKRRTAEYLMRAESISS). A phosphoserine mark is found at serine 282, serine 423, serine 427, serine 449, and serine 455. Residues 344 to 445 (GVIDKVLLVM…PTLAKVHLQQ (102 aa)) form the Protein kinase 1 domain. The tract at residues 441–509 (VHLQQPTSSP…SGSSSEEECT (69 aa)) is disordered. The segment covering 448 to 458 (SSPQDSSSFES) has biased composition (low complexity). The span at 474–483 (SSLTPSSQDD) shows a compositional bias: polar residues. Low complexity predominate over residues 492 to 503 (DSSPKWPDSGSS). Serine 494, serine 528, serine 583, serine 605, serine 608, serine 640, serine 661, serine 664, serine 667, and serine 794 each carry phosphoserine. The tract at residues 553-596 (HLAADSDSPSTQLRAHELKFFPNDDPEAVSSPRTSDSLSRSKNS) is disordered. The segment covering 582–593 (SSPRTSDSLSRS) has biased composition (low complexity). In terms of domain architecture, Protein kinase 2 spans 794 to 1056 (SSDPKFQGLG…VEDIKSHPFF (263 aa)). ATP contacts are provided by residues 801-809 (GLGVVESAV) and arginine 820. Serine 872 carries the post-translational modification Phosphoserine. Residue aspartate 929 is the Proton acceptor of the active site.

It belongs to the protein kinase superfamily. Ser/Thr protein kinase family. S6 kinase subfamily. As to quaternary structure, interacts with SPHK1 and phosphatidylinositol 3-phosphate. Interacts (via PX domain) with PRDX3. Highly expressed in testis, skeletal muscle, brain, heart, placenta, kidney and liver and weakly expressed in thymus, small intestine, lung and colon.

The protein resides in the cytoplasm. It localises to the membrane. The protein localises to the early endosome. It carries out the reaction L-seryl-[protein] + ATP = O-phospho-L-seryl-[protein] + ADP + H(+). The enzyme catalyses L-threonyl-[protein] + ATP = O-phospho-L-threonyl-[protein] + ADP + H(+). May be involved in transmitting sphingosine-1 phosphate (SPP)-mediated signaling into the cell. Plays a role in the recruitment of PRDX3 to early endosomes. This chain is Ribosomal protein S6 kinase delta-1 (RPS6KC1), found in Homo sapiens (Human).